We begin with the raw amino-acid sequence, 362 residues long: UDP-N-acetylglucosamine--N-acetylmuramyl-(pentapeptide) pyrophosphoryl-undecaprenol N-acetylglucosamine transferase (362 aa).

UDP-N-acetyl-alpha-D-glucosamine contacts are provided by residues 10 to 12 (TGG), N124, S194, I249, and Q294.

It belongs to the glycosyltransferase 28 family. MurG subfamily.

It is found in the cell membrane. It catalyses the reaction Mur2Ac(oyl-L-Ala-gamma-D-Glu-L-Lys-D-Ala-D-Ala)-di-trans,octa-cis-undecaprenyl diphosphate + UDP-N-acetyl-alpha-D-glucosamine = beta-D-GlcNAc-(1-&gt;4)-Mur2Ac(oyl-L-Ala-gamma-D-Glu-L-Lys-D-Ala-D-Ala)-di-trans,octa-cis-undecaprenyl diphosphate + UDP + H(+). Its pathway is cell wall biogenesis; peptidoglycan biosynthesis. Its function is as follows. Cell wall formation. Catalyzes the transfer of a GlcNAc subunit on undecaprenyl-pyrophosphoryl-MurNAc-pentapeptide (lipid intermediate I) to form undecaprenyl-pyrophosphoryl-MurNAc-(pentapeptide)GlcNAc (lipid intermediate II). This Pediococcus pentosaceus (strain ATCC 25745 / CCUG 21536 / LMG 10740 / 183-1w) protein is UDP-N-acetylglucosamine--N-acetylmuramyl-(pentapeptide) pyrophosphoryl-undecaprenol N-acetylglucosamine transferase.